The following is a 343-amino-acid chain: Methylthioribose-1-phosphate isomerase (343 aa).

Substrate is bound by residues Arg48–Ala50, Arg88, and Gln193. Asp234 (proton donor) is an active-site residue. Asn244–Lys245 contributes to the substrate binding site.

This sequence belongs to the eIF-2B alpha/beta/delta subunits family. MtnA subfamily.

It carries out the reaction 5-(methylsulfanyl)-alpha-D-ribose 1-phosphate = 5-(methylsulfanyl)-D-ribulose 1-phosphate. It participates in amino-acid biosynthesis; L-methionine biosynthesis via salvage pathway; L-methionine from S-methyl-5-thio-alpha-D-ribose 1-phosphate: step 1/6. Functionally, catalyzes the interconversion of methylthioribose-1-phosphate (MTR-1-P) into methylthioribulose-1-phosphate (MTRu-1-P). This chain is Methylthioribose-1-phosphate isomerase, found in Thermotoga neapolitana (strain ATCC 49049 / DSM 4359 / NBRC 107923 / NS-E).